We begin with the raw amino-acid sequence, 374 residues long: Transaldolase (374 aa).

K140 (schiff-base intermediate with substrate) is an active-site residue.

It belongs to the transaldolase family. Type 2 subfamily.

It localises to the cytoplasm. The enzyme catalyses D-sedoheptulose 7-phosphate + D-glyceraldehyde 3-phosphate = D-erythrose 4-phosphate + beta-D-fructose 6-phosphate. It participates in carbohydrate degradation; pentose phosphate pathway; D-glyceraldehyde 3-phosphate and beta-D-fructose 6-phosphate from D-ribose 5-phosphate and D-xylulose 5-phosphate (non-oxidative stage): step 2/3. Functionally, transaldolase is important for the balance of metabolites in the pentose-phosphate pathway. The sequence is that of Transaldolase from Renibacterium salmoninarum (strain ATCC 33209 / DSM 20767 / JCM 11484 / NBRC 15589 / NCIMB 2235).